The sequence spans 599 residues: NADH-quinone oxidoreductase subunit C/D (599 aa).

The segment covering 1-15 (MTDLTAQELAQPSWQ) has biased composition (polar residues). The segment at 1 to 21 (MTDLTAQELAQPSWQTRDHQD) is disordered. An NADH dehydrogenase I subunit C region spans residues 1-189 (MTDLTAQELA…DPFELTKQKE (189 aa)). The tract at residues 213-599 (DFMFLNLGPN…IDFVMSDVDR (387 aa)) is NADH dehydrogenase I subunit D.

This sequence in the N-terminal section; belongs to the complex I 30 kDa subunit family. The protein in the C-terminal section; belongs to the complex I 49 kDa subunit family. In terms of assembly, NDH-1 is composed of 13 different subunits. Subunits NuoB, CD, E, F, and G constitute the peripheral sector of the complex.

The protein resides in the cell inner membrane. The catalysed reaction is a quinone + NADH + 5 H(+)(in) = a quinol + NAD(+) + 4 H(+)(out). Functionally, NDH-1 shuttles electrons from NADH, via FMN and iron-sulfur (Fe-S) centers, to quinones in the respiratory chain. The immediate electron acceptor for the enzyme in this species is believed to be ubiquinone. Couples the redox reaction to proton translocation (for every two electrons transferred, four hydrogen ions are translocated across the cytoplasmic membrane), and thus conserves the redox energy in a proton gradient. The chain is NADH-quinone oxidoreductase subunit C/D from Erwinia tasmaniensis (strain DSM 17950 / CFBP 7177 / CIP 109463 / NCPPB 4357 / Et1/99).